Here is a 455-residue protein sequence, read N- to C-terminus: Homeobox protein 14 (455 aa).

Composition is skewed to low complexity over residues 1–16, 24–39, 81–118, 179–239, and 263–294; these read MNHN…KNNS, SSRS…SSSG, TTTT…ESPN, ESPN…SPSF, and NNNN…TNNN. Disordered stretches follow at residues 1–53, 67–121, 178–239, and 258–296; these read MNHN…SSIN, KQTK…NCNK, SESP…SPSF, and TLLS…NNGD. 2 DNA-binding regions (homeobox) span residues 310–369 and 372–431; these read KSGQ…SKSG and SYAK…NKLS. Positions 431–455 are disordered; sequence SSKANQDNDNNNNNENNDDSYSDEG. Residues 435–445 are compositionally biased toward low complexity; the sequence is NQDNDNNNNNE. Residues 446-455 show a composition bias toward acidic residues; the sequence is NNDDSYSDEG.

It localises to the nucleus. Putative transcription factor. In Dictyostelium discoideum (Social amoeba), this protein is Homeobox protein 14 (hbx14).